The following is a 393-amino-acid chain: MPLKSHEFTSESVAEGHPDKVADQISDAIVDLFLSKDPTSKVAVETLCTTNRVVLAGEVRTNNGSVVTPDEMNAAARAVVKKIGYEQDGFHWEKMAVENHVHGQSAEIAQGVEEGQGLFKEEGAGDQGIMFGYATDETPELMPATLVYSHQILQKLAELRHSGKNPQLEPDAKSQVTLQYEGSRPVGVNAVVVSHQHKAGVSQEELREVIRPVVKAVLPEGWFPPEEKFYVNPTGSFVIGGPDGDCGLTGRKIIVDTYGGAAPHGGGAFSGKDPSKVDRSAAYATRYLAKNIVAAGLATRCTIQVSYAIGVAQPLSIYVDTHGTGQADEARIAKAVRELFDLSPKGIRTHLKLSNPIYGPTAAYGHFGRIPGEGGTFTWEKTDLAGELKRLVN.

Position 17 (histidine 17) interacts with ATP. Aspartate 19 contributes to the Mg(2+) binding site. Position 45 (glutamate 45) interacts with K(+). Glutamate 58 and glutamine 104 together coordinate L-methionine. Positions 104–114 (QSAEIAQGVEE) are flexible loop. Residues 171–173 (DAK), aspartate 245, 251–252 (RK), alanine 268, and lysine 272 contribute to the ATP site. Residue aspartate 245 participates in L-methionine binding. An L-methionine-binding site is contributed by lysine 276.

Belongs to the AdoMet synthase family. As to quaternary structure, homotetramer; dimer of dimers. It depends on Mg(2+) as a cofactor. K(+) is required as a cofactor.

Its subcellular location is the cytoplasm. It catalyses the reaction L-methionine + ATP + H2O = S-adenosyl-L-methionine + phosphate + diphosphate. It functions in the pathway amino-acid biosynthesis; S-adenosyl-L-methionine biosynthesis; S-adenosyl-L-methionine from L-methionine: step 1/1. Catalyzes the formation of S-adenosylmethionine (AdoMet) from methionine and ATP. The overall synthetic reaction is composed of two sequential steps, AdoMet formation and the subsequent tripolyphosphate hydrolysis which occurs prior to release of AdoMet from the enzyme. The chain is S-adenosylmethionine synthase from Hyphomonas neptunium (strain ATCC 15444).